The primary structure comprises 272 residues: Octanoyltransferase (272 aa).

Over residues 1 to 12 (MQQDPPTSQPHT) the composition is skewed to polar residues. A disordered region spans residues 1–20 (MQQDPPTSQPHTPQIVDGVK). The region spanning 65 to 255 (HQRPNTVIYV…EMMSFQPYEM (191 aa)) is the BPL/LPL catalytic domain. Residues 103–110 (RGGEITWH), 175–177 (AIG), and 188–190 (GFA) each bind substrate. Cys206 serves as the catalytic Acyl-thioester intermediate.

This sequence belongs to the LipB family.

The protein localises to the cytoplasm. It catalyses the reaction octanoyl-[ACP] + L-lysyl-[protein] = N(6)-octanoyl-L-lysyl-[protein] + holo-[ACP] + H(+). The protein operates within protein modification; protein lipoylation via endogenous pathway; protein N(6)-(lipoyl)lysine from octanoyl-[acyl-carrier-protein]: step 1/2. Catalyzes the transfer of endogenously produced octanoic acid from octanoyl-acyl-carrier-protein onto the lipoyl domains of lipoate-dependent enzymes. Lipoyl-ACP can also act as a substrate although octanoyl-ACP is likely to be the physiological substrate. This chain is Octanoyltransferase, found in Cutibacterium acnes (strain DSM 16379 / KPA171202) (Propionibacterium acnes).